The sequence spans 340 residues: Uroporphyrinogen decarboxylase (340 aa).

Residues 23 to 27 (RQAGR), aspartate 72, tyrosine 147, threonine 202, and histidine 316 contribute to the substrate site.

Belongs to the uroporphyrinogen decarboxylase family. As to quaternary structure, homodimer.

Its subcellular location is the cytoplasm. The catalysed reaction is uroporphyrinogen III + 4 H(+) = coproporphyrinogen III + 4 CO2. It functions in the pathway porphyrin-containing compound metabolism; protoporphyrin-IX biosynthesis; coproporphyrinogen-III from 5-aminolevulinate: step 4/4. Functionally, catalyzes the decarboxylation of four acetate groups of uroporphyrinogen-III to yield coproporphyrinogen-III. This chain is Uroporphyrinogen decarboxylase, found in Trichlorobacter lovleyi (strain ATCC BAA-1151 / DSM 17278 / SZ) (Geobacter lovleyi).